A 99-amino-acid polypeptide reads, in one-letter code: NADH-quinone oxidoreductase subunit K (99 aa).

A run of 3 helical transmembrane segments spans residues 3–23, 28–48, and 59–79; these read PINY…GVLL, IVMF…FVTF, and MIAF…LAII.

This sequence belongs to the complex I subunit 4L family. NDH-1 is composed of 14 different subunits. Subunits NuoA, H, J, K, L, M, N constitute the membrane sector of the complex.

The protein resides in the cell membrane. It catalyses the reaction a quinone + NADH + 5 H(+)(in) = a quinol + NAD(+) + 4 H(+)(out). NDH-1 shuttles electrons from NADH, via FMN and iron-sulfur (Fe-S) centers, to quinones in the respiratory chain. The immediate electron acceptor for the enzyme in this species is believed to be a menaquinone. Couples the redox reaction to proton translocation (for every two electrons transferred, four hydrogen ions are translocated across the cytoplasmic membrane), and thus conserves the redox energy in a proton gradient. The sequence is that of NADH-quinone oxidoreductase subunit K from Mycobacterium avium (strain 104).